The primary structure comprises 313 residues: NADH-ubiquinone oxidoreductase chain 2 (313 aa).

Helical transmembrane passes span Ile-3–Trp-23, Ser-47–Phe-67, Ile-81–Ile-101, Leu-105–Ile-125, Phe-128–Ala-148, Leu-153–Ile-173, Met-177–Asn-197, Asn-220–Met-240, Leu-253–Thr-275, and Lys-293–Phe-313.

Belongs to the complex I subunit 2 family.

The protein localises to the mitochondrion inner membrane. It catalyses the reaction a ubiquinone + NADH + 5 H(+)(in) = a ubiquinol + NAD(+) + 4 H(+)(out). Functionally, core subunit of the mitochondrial membrane respiratory chain NADH dehydrogenase (Complex I) that is believed to belong to the minimal assembly required for catalysis. Complex I functions in the transfer of electrons from NADH to the respiratory chain. The immediate electron acceptor for the enzyme is believed to be ubiquinone. This is NADH-ubiquinone oxidoreductase chain 2 (ND2) from Rhipicephalus sanguineus (Brown dog tick).